Here is a 294-residue protein sequence, read N- to C-terminus: Glycine--tRNA ligase alpha subunit (294 aa).

The protein belongs to the class-II aminoacyl-tRNA synthetase family. As to quaternary structure, tetramer of two alpha and two beta subunits.

It localises to the cytoplasm. It catalyses the reaction tRNA(Gly) + glycine + ATP = glycyl-tRNA(Gly) + AMP + diphosphate. This chain is Glycine--tRNA ligase alpha subunit, found in Oleidesulfovibrio alaskensis (strain ATCC BAA-1058 / DSM 17464 / G20) (Desulfovibrio alaskensis).